The following is a 138-amino-acid chain: Large ribosomal subunit protein uL16 (138 aa).

The protein belongs to the universal ribosomal protein uL16 family. Part of the 50S ribosomal subunit.

Binds 23S rRNA and is also seen to make contacts with the A and possibly P site tRNAs. This is Large ribosomal subunit protein uL16 from Chlamydia muridarum (strain MoPn / Nigg).